The chain runs to 444 residues: Bifunctional protein GlmU (444 aa).

The pyrophosphorylase stretch occupies residues 1–226; the sequence is MTDSTHRTTA…EAELAGVNSR (226 aa). UDP-N-acetyl-alpha-D-glucosamine-binding positions include 13–16, Lys-27, Gln-75, and 80–81; these read LAAG and GT. Position 103 (Asp-103) interacts with Mg(2+). The UDP-N-acetyl-alpha-D-glucosamine site is built by Gly-139, Glu-153, Asn-168, and Asn-224. Asn-224 contributes to the Mg(2+) binding site. Positions 227–247 are linker; that stretch reads SELARAEATLQTRLRNAAMDA. The N-acetyltransferase stretch occupies residues 248 to 444; sequence GVTLVAPETV…QSLKARKEQG (197 aa). Residues Arg-313 and Lys-331 each coordinate UDP-N-acetyl-alpha-D-glucosamine. Catalysis depends on His-343, which acts as the Proton acceptor. 2 residues coordinate UDP-N-acetyl-alpha-D-glucosamine: Tyr-346 and Asn-357. Acetyl-CoA is bound by residues Ala-360, 366–367, Ser-385, Ala-403, and Arg-420; that span reads NY.

This sequence in the N-terminal section; belongs to the N-acetylglucosamine-1-phosphate uridyltransferase family. It in the C-terminal section; belongs to the transferase hexapeptide repeat family. Homotrimer. It depends on Mg(2+) as a cofactor.

It is found in the cytoplasm. It carries out the reaction alpha-D-glucosamine 1-phosphate + acetyl-CoA = N-acetyl-alpha-D-glucosamine 1-phosphate + CoA + H(+). The catalysed reaction is N-acetyl-alpha-D-glucosamine 1-phosphate + UTP + H(+) = UDP-N-acetyl-alpha-D-glucosamine + diphosphate. The protein operates within nucleotide-sugar biosynthesis; UDP-N-acetyl-alpha-D-glucosamine biosynthesis; N-acetyl-alpha-D-glucosamine 1-phosphate from alpha-D-glucosamine 6-phosphate (route II): step 2/2. Its pathway is nucleotide-sugar biosynthesis; UDP-N-acetyl-alpha-D-glucosamine biosynthesis; UDP-N-acetyl-alpha-D-glucosamine from N-acetyl-alpha-D-glucosamine 1-phosphate: step 1/1. It participates in bacterial outer membrane biogenesis; LPS lipid A biosynthesis. Catalyzes the last two sequential reactions in the de novo biosynthetic pathway for UDP-N-acetylglucosamine (UDP-GlcNAc). The C-terminal domain catalyzes the transfer of acetyl group from acetyl coenzyme A to glucosamine-1-phosphate (GlcN-1-P) to produce N-acetylglucosamine-1-phosphate (GlcNAc-1-P), which is converted into UDP-GlcNAc by the transfer of uridine 5-monophosphate (from uridine 5-triphosphate), a reaction catalyzed by the N-terminal domain. This chain is Bifunctional protein GlmU, found in Gluconobacter oxydans (strain 621H) (Gluconobacter suboxydans).